Consider the following 216-residue polypeptide: Uracil phosphoribosyltransferase (216 aa).

Residues R85, R110, and 135–143 contribute to the 5-phospho-alpha-D-ribose 1-diphosphate site; that span reads DPMVATGYS. Residues I200 and 205–207 each bind uracil; that span reads GDA. D206 is a 5-phospho-alpha-D-ribose 1-diphosphate binding site.

The protein belongs to the UPRTase family. Requires Mg(2+) as cofactor.

It carries out the reaction UMP + diphosphate = 5-phospho-alpha-D-ribose 1-diphosphate + uracil. Its pathway is pyrimidine metabolism; UMP biosynthesis via salvage pathway; UMP from uracil: step 1/1. Allosterically activated by GTP. In terms of biological role, catalyzes the conversion of uracil and 5-phospho-alpha-D-ribose 1-diphosphate (PRPP) to UMP and diphosphate. This Burkholderia thailandensis (strain ATCC 700388 / DSM 13276 / CCUG 48851 / CIP 106301 / E264) protein is Uracil phosphoribosyltransferase.